The following is a 128-amino-acid chain: Small ribosomal subunit protein uS11m (128 aa).

It belongs to the universal ribosomal protein uS11 family.

The protein localises to the mitochondrion. The polypeptide is Small ribosomal subunit protein uS11m (RPS11) (Prototheca wickerhamii).